We begin with the raw amino-acid sequence, 548 residues long: Putative malate oxidoreductase [NAD] (548 aa).

Tyr96 functions as the Proton donor in the catalytic mechanism. The active-site Proton acceptor is the Lys169. Residues Glu240, Asp241, and Asp264 each coordinate a divalent metal cation. NAD(+) contacts are provided by residues 297–300, Asn410, and Asn455; that span reads AGTA.

The protein belongs to the malic enzymes family. It depends on Mg(2+) as a cofactor. Requires Mn(2+) as cofactor.

The catalysed reaction is (S)-malate + NAD(+) = pyruvate + CO2 + NADH. It carries out the reaction oxaloacetate + H(+) = pyruvate + CO2. This is Putative malate oxidoreductase [NAD] (mez) from Mycobacterium tuberculosis (strain CDC 1551 / Oshkosh).